The primary structure comprises 283 residues: Circadian clock oscillator protein KaiA (283 aa).

The segment at 1–146 (MAQSTALTIC…LFRLPALKES (146 aa)) is psR domain, not required to form KaiA:KaiB:KaiC complex, or for a full KaiC phosphorylation cycle. In terms of domain architecture, KaiA N-terminal spans 3–163 (QSTALTICGL…RLSQKLKERL (161 aa)). Residues 164 to 172 (GYLGVYYKR) are flexible linker. The 109-residue stretch at 173–281 (DTAFFFRRMS…CEMYRRSIPR (109 aa)) folds into the KaiA C-terminal domain.

Belongs to the KaiA family. In terms of assembly, homodimer. The KaiABC complex composition changes during the circadian cycle to control KaiC phosphorylation. Complexes KaiC(6), KaiA(2-4):KaiC(6), KaiB(6):KaiC(6) and KaiC(6):KaiB(6):KaiA(12) are among the most important forms, many form cooperatively. Binds to KaiB and KaiC, the N-terminus (pseudoreceiver domain PsR) is not required for either interaction. 1 KaiB binds to one subunit of the KaiA homodimer. KaiA and CikA bind to the same region of the KaiB(fs) form and therefore compete.

Its function is as follows. Key component of the KaiABC oscillator complex, which constitutes the main circadian regulator in cyanobacteria. Complex composition changes during the circadian cycle to control KaiC phosphorylation. KaiA stimulates KaiC autophosphorylation, while KaiB sequesters KaiA, leading to KaiC autodephosphorylation. KaiA binding to the KaiC CII domain during the subjective day yields KaiA(2-4):KaiC(6) complexes which stimulate KaiC autophosphorylation. Phospho-Ser-431 KaiC accumulation triggers binding of KaiB during the subjective night to form the KaiB(6):KaiC(6) complex, leading to changes in the output regulators CikA and SasA. KaiB(6):KaiC(6) formation exposes a site for KaiA binding on KaiB that sequesters KaiA from KaiC's CII domain, making the KaiC(6):KaiB(6):KaiA(12) complex resulting in KaiC autodephosphorylation. Complete dephosphorylation of KaiC leads to dissociation of KaiA(2):KaiB(1), completing 1 cycle of the Kai oscillator. Formation of the KaiB:KaiC complex is promoted by KaiA, helping switch KaiC from its autophosphorylation to autodephosphatase function. Binds oxidized quinones via the N-terminal PsR domain, allowing it to sense redox changes and possibly mediate clock input. The protein is Circadian clock oscillator protein KaiA of Thermosynechococcus vestitus (strain NIES-2133 / IAM M-273 / BP-1).